The primary structure comprises 439 residues: Na(+)/H(+) antiporter NhaA (439 aa).

Transmembrane regions (helical) follow at residues 12–32 (SMNI…AIIA), 67–87 (MIEF…GLEI), 103–123 (ALPF…YMSI), 133–153 (GLAI…SLLG), 162–182 (IFLT…IALF), 186–206 (HVSY…YFIG), 214–234 (IFFL…GIHS), 314–334 (ILPL…GELV), 341–361 (VAAG…WLAI), 379–399 (GIAL…NLSF), and 412–432 (FGVL…LRIV).

This sequence belongs to the NhaA Na(+)/H(+) (TC 2.A.33) antiporter family.

It localises to the cell inner membrane. The catalysed reaction is Na(+)(in) + 2 H(+)(out) = Na(+)(out) + 2 H(+)(in). In terms of biological role, na(+)/H(+) antiporter that extrudes sodium in exchange for external protons. The sequence is that of Na(+)/H(+) antiporter NhaA from Bacteroides thetaiotaomicron (strain ATCC 29148 / DSM 2079 / JCM 5827 / CCUG 10774 / NCTC 10582 / VPI-5482 / E50).